We begin with the raw amino-acid sequence, 360 residues long: Phospho-N-acetylmuramoyl-pentapeptide-transferase (360 aa).

Transmembrane regions (helical) follow at residues 26–46, 73–93, 97–117, 132–152, 168–188, 199–219, 236–256, 263–283, 288–308, and 338–358; these read AILGLMTALMFSLWWGPKMIA, TMGGLLILAGVFISVLLWGDL, YVWVVLFVLGSFGLIGFIDDY, WKYLLQSLAALLIAVYLYASA, VMPQLGGFFIVLVYFTIVGSS, GLAIMPTVMVAAAFALIAYLS, AGELVIVCTAIVGAGLGFLWF, VFMGDVGSLSLGAALGTIAVL, ILLVIMGGVFVMETVSVILQV, and VIVRFWIISLFLVLLGLATLK.

The protein belongs to the glycosyltransferase 4 family. MraY subfamily. It depends on Mg(2+) as a cofactor.

It is found in the cell inner membrane. The enzyme catalyses UDP-N-acetyl-alpha-D-muramoyl-L-alanyl-gamma-D-glutamyl-meso-2,6-diaminopimeloyl-D-alanyl-D-alanine + di-trans,octa-cis-undecaprenyl phosphate = di-trans,octa-cis-undecaprenyl diphospho-N-acetyl-alpha-D-muramoyl-L-alanyl-D-glutamyl-meso-2,6-diaminopimeloyl-D-alanyl-D-alanine + UMP. It participates in cell wall biogenesis; peptidoglycan biosynthesis. Its function is as follows. Catalyzes the initial step of the lipid cycle reactions in the biosynthesis of the cell wall peptidoglycan: transfers peptidoglycan precursor phospho-MurNAc-pentapeptide from UDP-MurNAc-pentapeptide onto the lipid carrier undecaprenyl phosphate, yielding undecaprenyl-pyrophosphoryl-MurNAc-pentapeptide, known as lipid I. The polypeptide is Phospho-N-acetylmuramoyl-pentapeptide-transferase (Shewanella halifaxensis (strain HAW-EB4)).